Consider the following 1342-residue polypeptide: DNA-directed RNA polymerase subunit beta (1342 aa).

Belongs to the RNA polymerase beta chain family. As to quaternary structure, the RNAP catalytic core consists of 2 alpha, 1 beta, 1 beta' and 1 omega subunit. When a sigma factor is associated with the core the holoenzyme is formed, which can initiate transcription.

It carries out the reaction RNA(n) + a ribonucleoside 5'-triphosphate = RNA(n+1) + diphosphate. In terms of biological role, DNA-dependent RNA polymerase catalyzes the transcription of DNA into RNA using the four ribonucleoside triphosphates as substrates. The chain is DNA-directed RNA polymerase subunit beta from Buchnera aphidicola subsp. Acyrthosiphon pisum (strain Tuc7).